We begin with the raw amino-acid sequence, 178 residues long: Probable inosine/xanthosine triphosphatase (178 aa).

The protein belongs to the YjjX NTPase family. As to quaternary structure, homodimer. The cofactor is Mg(2+). Mn(2+) serves as cofactor.

The enzyme catalyses XTP + H2O = XDP + phosphate + H(+). The catalysed reaction is ITP + H2O = IDP + phosphate + H(+). Functionally, phosphatase that hydrolyzes non-canonical purine nucleotides such as XTP and ITP to their respective diphosphate derivatives. Probably excludes non-canonical purines from DNA/RNA precursor pool, thus preventing their incorporation into DNA/RNA and avoiding chromosomal lesions. The sequence is that of Probable inosine/xanthosine triphosphatase from Pyrobaculum aerophilum (strain ATCC 51768 / DSM 7523 / JCM 9630 / CIP 104966 / NBRC 100827 / IM2).